The chain runs to 200 residues: Pyrrolidone-carboxylate peptidase (200 aa).

Active-site residues include Glu79, Cys142, and His166.

The protein belongs to the peptidase C15 family. As to quaternary structure, homotetramer.

It localises to the cytoplasm. It carries out the reaction Release of an N-terminal pyroglutamyl group from a polypeptide, the second amino acid generally not being Pro.. Functionally, removes 5-oxoproline from various penultimate amino acid residues except L-proline. The sequence is that of Pyrrolidone-carboxylate peptidase (pcp) from Pyrococcus abyssi (strain GE5 / Orsay).